The following is a 120-amino-acid chain: Putative B3 domain-containing protein At3g28853 (120 aa).

A DNA-binding region (TF-B3) is located at residues 19-120 (INKRLTQSDV…DKSNEVFYII (102 aa)).

It is found in the nucleus. The sequence is that of Putative B3 domain-containing protein At3g28853 from Arabidopsis thaliana (Mouse-ear cress).